Consider the following 369-residue polypeptide: Putative transport protein YueF (369 aa).

8 helical membrane-spanning segments follow: residues 13-33, 34-54, 73-93, 159-179, 213-233, 234-254, 271-291, and 316-336; these read ILFV…FQPF, IVFI…YFIF, LIYL…GPII, AVFG…FILF, DTLA…GTAC, FIGY…VMAI, VIVG…VVVI, and IILL…ILAV.

This sequence belongs to the autoinducer-2 exporter (AI-2E) (TC 2.A.86) family.

The protein resides in the cell membrane. The protein is Putative transport protein YueF (yueF) of Bacillus subtilis (strain 168).